A 341-amino-acid chain; its full sequence is Probable long-chain-alcohol O-fatty-acyltransferase 1 (341 aa).

8 helical membrane-spanning segments follow: residues 7–27, 36–56, 58–78, 120–140, 149–169, 233–253, 261–281, and 293–313; these read NLIE…YISS, LLSI…LSCV, FCAI…LLFA, PMPK…LHVY, FVVL…VLVF, MFAG…LLYF, TWEV…EIAV, and AVSG…LFLA.

Belongs to the wax synthase family.

The protein resides in the membrane. It carries out the reaction a long chain fatty alcohol + a fatty acyl-CoA = a wax ester + CoA. Catalyzes the final step in the synthesis of long-chain linear esters (waxes). This Arabidopsis thaliana (Mouse-ear cress) protein is Probable long-chain-alcohol O-fatty-acyltransferase 1 (AT1).